A 169-amino-acid polypeptide reads, in one-letter code: UPF0725 protein At2g19200 (169 aa).

It belongs to the UPF0725 (EMB2204) family.

The protein is UPF0725 protein At2g19200 of Arabidopsis thaliana (Mouse-ear cress).